A 1647-amino-acid chain; its full sequence is Maestro heat-like repeat-containing protein family member 1 (1647 aa).

11 HEAT repeats span residues 9–47 (SPVL…RQPN), 65–103 (QTHR…SEMT), 224–262 (SEFY…ILSV), 351–389 (RGYS…RLDV), 597–635 (DVTL…TIKN), 968–1006 (FDSI…IGFM), 1131–1168 (SLAN…DKNL), 1364–1400 (KELI…AGVE), 1403–1441 (NRYA…VADE), 1490–1528 (YEQI…LMRS), and 1612–1647 (NINS…LHHY).

This sequence belongs to the MROH1 family. As to quaternary structure, homooligomer.

It localises to the lysosome membrane. Its function is as follows. Lysosome fission factor. This chain is Maestro heat-like repeat-containing protein family member 1 (mroh1), found in Dictyostelium discoideum (Social amoeba).